A 56-amino-acid chain; its full sequence is Large ribosomal subunit protein bL32 (56 aa).

It belongs to the bacterial ribosomal protein bL32 family.

In Prochlorococcus marinus (strain MIT 9215), this protein is Large ribosomal subunit protein bL32.